The chain runs to 220 residues: Translation initiation factor 6 (220 aa).

This sequence belongs to the eIF-6 family.

In terms of biological role, binds to the 50S ribosomal subunit and prevents its association with the 30S ribosomal subunit to form the 70S initiation complex. The polypeptide is Translation initiation factor 6 (Halobacterium salinarum (strain ATCC 29341 / DSM 671 / R1)).